The sequence spans 428 residues: Protein clpf-1 (428 aa).

ATP contacts are provided by Glu16 and Arg56. The interval 99–118 is disordered; that stretch reads KKREEQAVSNSSKPKGPRLL. Position 124-129 (124-129) interacts with ATP; that stretch reads DVGKTT.

This sequence belongs to the Clp1 family. Clp1 subfamily.

The protein localises to the nucleus. Functionally, required for endonucleolytic cleavage during polyadenylation-dependent pre-mRNA 3'-end formation. This is Protein clpf-1 from Caenorhabditis briggsae.